A 1336-amino-acid polypeptide reads, in one-letter code: Misshapen-like kinase 1 (1336 aa).

In terms of domain architecture, Protein kinase spans 25 to 289; sequence FELVEVVGNG…TEQLLKFPFI (265 aa). ATP contacts are provided by residues 31–39 and Lys54; that span reads VGNGTYGQV. Residue Asp153 is the Proton acceptor of the active site. Disordered stretches follow at residues 299–347, 363–383, and 395–890; these read RIQL…NVPG, KSNSEALKQQQQLQQQQQRDP, and QRRI…GGTM. The segment covering 317–333 has biased composition (acidic residues); it reads EETEYEYSGSEEEDDSH. A phosphoserine mark is found at Ser324 and Ser326. Positions 371 to 380 are enriched in low complexity; it reads QQQQLQQQQQ. The span at 396 to 466 shows a compositional bias: basic and acidic residues; sequence RRIEEQKEER…EEQRQSERLQ (71 aa). Residues 479 to 496 show a composition bias toward low complexity; the sequence is QKQQQQQQQQQQQQQQQQ. Omega-N-methylarginine is present on residues Arg502 and Arg510. Residues 519 to 529 show a composition bias toward basic and acidic residues; the sequence is AWAREVEERAR. Over residues 531 to 544 the composition is skewed to polar residues; sequence NKQQNSPLAKTKPS. Over residues 548–562 the composition is skewed to pro residues; sequence PEPPIPQASPSPPGP. Over residues 599–609 the composition is skewed to polar residues; it reads RSQSLQDQPTR. The span at 622 to 632 shows a compositional bias: low complexity; sequence PAAVPTPTATP. Position 643 is a phosphoserine (Ser643). Polar residues predominate over residues 672-684; sequence QRTSSIATALNTS. Ser703 carries the post-translational modification Phosphoserine. The segment covering 718–731 has biased composition (pro residues); the sequence is PKPPGPPAQPPGPP. The segment covering 738-750 has biased composition (basic and acidic residues); sequence DLRRSDPGWERSD. Ser756, Ser765, Ser781, Ser782, and Ser786 each carry phosphoserine. A compositionally biased stretch (basic and acidic residues) spans 808-825; it reads LLKERTLDEAPKPPKKAM. The span at 832–848 shows a compositional bias: acidic residues; that stretch reads EEVESSEDEEEEGDGEP. The segment at 870–1336 is mediates interaction with RAP2A; sequence MVVHDVEEVS…TLNRNCIMNW (467 aa). The residue at position 895 (Thr895) is a Phosphothreonine. The segment at 909–946 is disordered; sequence GYTNLPDVVQPSHSPTENSQGQSPPTKDGGGDYQSRGL. Over residues 919–933 the composition is skewed to polar residues; the sequence is PSHSPTENSQGQSPP. One can recognise a CNH domain in the interval 1023–1310; sequence NSEILCAALW…KFLCERNDKV (288 aa).

Belongs to the protein kinase superfamily. STE Ser/Thr protein kinase family. STE20 subfamily. In terms of assembly, interacts with RAP2A and NCK1. Interacts with TANC1. The cofactor is Mg(2+). In terms of processing, autophosphorylated.

Its subcellular location is the cytoplasm. The protein resides in the postsynaptic density. The protein localises to the cell projection. It localises to the axon. It is found in the dendrite. The enzyme catalyses L-seryl-[protein] + ATP = O-phospho-L-seryl-[protein] + ADP + H(+). It carries out the reaction L-threonyl-[protein] + ATP = O-phospho-L-threonyl-[protein] + ADP + H(+). In terms of biological role, serine/threonine kinase which acts as a negative regulator of Ras-related Rap2-mediated signal transduction to control neuronal structure and AMPA receptor trafficking. Required for normal synaptic density, dendrite complexity, as well as surface AMPA receptor expression in hippocampal neurons. Can activate the JNK and MAPK14/p38 pathways and mediates stimulation of the stress-activated protein kinase MAPK14/p38 MAPK downstream of the Raf/ERK pathway. Phosphorylates TANC1 upon stimulation by RAP2A, MBP and SMAD1. Has an essential function in negative selection of thymocytes, perhaps by coupling NCK1 to activation of JNK1. Activator of the Hippo signaling pathway which plays a pivotal role in organ size control and tumor suppression by restricting proliferation and promoting apoptosis. MAP4Ks act in parallel to and are partially redundant with STK3/MST2 and STK4/MST2 in the phosphorylation and activation of LATS1/2, and establish MAP4Ks as components of the expanded Hippo pathway. This is Misshapen-like kinase 1 (Mink1) from Rattus norvegicus (Rat).